The sequence spans 1378 residues: Protein CLASP-1 (1378 aa).

An HEAT 1 repeat occupies 168–206 (LIPQLCRLTNDPNSEVRDVSTQCLIDLMVYGGKPIVAKI). 3 disordered regions span residues 231–254 (RGDLPPKHTITMETTPAQPSRNSL), 266–325 (IHPS…TRSS), and 590–725 (MLRD…HQTP). Low complexity-rich tracts occupy residues 269–283 (SASTTSFTSSARLST) and 610–619 (NQKQQPNQQN). Polar residues-rich tracts occupy residues 620–630 (ISQKFLSQRSA) and 637–648 (IQLSVKPQTTAI). The span at 664 to 676 (SSTSTSFSAVRSS) shows a compositional bias: low complexity. The segment covering 677 to 690 (GYGQNQSTTPNRAK) has biased composition (polar residues). A compositionally biased stretch (low complexity) spans 704–721 (TNGNNNNKSSSSSPSTST). Residues 740–767 (ASLTQEQANCLQNAMNTAKDEMSKNNED) adopt a coiled-coil conformation. Residues 775-784 (IRKTPPKEVP) are compositionally biased toward basic and acidic residues. The disordered stretch occupies residues 775–823 (IRKTPPKEVPRSYNNSPFKPSNLDSSVHRSYNNNSPFRPSSGSVGSGSN). The span at 786–812 (SYNNSPFKPSNLDSSVHRSYNNNSPFR) shows a compositional bias: polar residues. The HEAT 2 repeat unit spans residues 1305 to 1341 (HLIVNDVAPCFVTAYESMSSTVRKCAVFGLVALVQRV).

It belongs to the CLASP family.

It is found in the cytoplasm. The protein localises to the cytoskeleton. Functionally, microtubule plus-end tracking protein that promotes the stabilization of dynamic microtubules. Operates redundantly with cls-2 and cls-3 in regulating microtubule processes which position the spindle during asymmetric cell division. The chain is Protein CLASP-1 (cls-1) from Caenorhabditis elegans.